A 510-amino-acid polypeptide reads, in one-letter code: UDP-N-acetylmuramate--L-alanine ligase (510 aa).

Residues 1-25 (MVETVGGKDAVAPAPARSPSPPAKN) are disordered. 140-146 (GTHGKTT) is a binding site for ATP.

The protein belongs to the MurCDEF family.

The protein resides in the cytoplasm. The catalysed reaction is UDP-N-acetyl-alpha-D-muramate + L-alanine + ATP = UDP-N-acetyl-alpha-D-muramoyl-L-alanine + ADP + phosphate + H(+). It participates in cell wall biogenesis; peptidoglycan biosynthesis. In terms of biological role, cell wall formation. In Synechococcus sp. (strain JA-3-3Ab) (Cyanobacteria bacterium Yellowstone A-Prime), this protein is UDP-N-acetylmuramate--L-alanine ligase.